A 261-amino-acid chain; its full sequence is Small ribosomal subunit protein eS1 (261 aa).

Basic residues predominate over residues 1–18; sequence MAVGKNKRISKGKKGGKK. A disordered region spans residues 1-23; the sequence is MAVGKNKRISKGKKGGKKKAADP.

It belongs to the eukaryotic ribosomal protein eS1 family. In terms of assembly, component of the small ribosomal subunit. Mature ribosomes consist of a small (40S) and a large (60S) subunit. The 40S subunit contains about 33 different proteins and 1 molecule of RNA (18S). The 60S subunit contains about 49 different proteins and 3 molecules of RNA (25S, 5.8S and 5S).

It localises to the cytoplasm. In Nicotiana tabacum (Common tobacco), this protein is Small ribosomal subunit protein eS1 (cyc07).